We begin with the raw amino-acid sequence, 303 residues long: Protoheme IX farnesyltransferase (303 aa).

Helical transmembrane passes span 30 to 50 (VMSLVIFTCAVGLLMAPSTVS), 54 to 74 (AMIAILLVSIGAGAAGALNMW), 101 to 121 (ALIFGTSLSFFSVIALDYFAN), 123 to 143 (ISAVLLLFTILFYVFVYTIWL), 150 to 170 (NIVIGGAAGALPPVIGWTIAT), 178 to 198 (ITFFLIIFFWTPSHFWALSLY), 219 to 241 (STKINILVYSLLMLPMVILPYAI), 245 to 262 (GLVFLVPALMLTLYYNIL), and 279 to 299 (AKTIFGYSILYLFLIFVIFLI).

Belongs to the UbiA prenyltransferase family. Protoheme IX farnesyltransferase subfamily.

It is found in the cell inner membrane. The enzyme catalyses heme b + (2E,6E)-farnesyl diphosphate + H2O = Fe(II)-heme o + diphosphate. Its pathway is porphyrin-containing compound metabolism; heme O biosynthesis; heme O from protoheme: step 1/1. Its function is as follows. Converts heme B (protoheme IX) to heme O by substitution of the vinyl group on carbon 2 of heme B porphyrin ring with a hydroxyethyl farnesyl side group. This chain is Protoheme IX farnesyltransferase, found in Pelagibacter ubique (strain HTCC1062).